We begin with the raw amino-acid sequence, 239 residues long: Small ribosomal subunit protein uS2 (239 aa).

This sequence belongs to the universal ribosomal protein uS2 family.

This Synechococcus sp. (strain CC9902) protein is Small ribosomal subunit protein uS2.